An 84-amino-acid chain; its full sequence is MAAEKIYEPYKKSRGTMIYTPTNQQMSRGGIGEKLADFVKNLYWVYYIHLPFYLMTSLDAFCLHTIFLVVVSLSLFGLLKYIFL.

The chain crosses the membrane as a helical span at residues 63 to 83 (LHTIFLVVVSLSLFGLLKYIF).

Its subcellular location is the endoplasmic reticulum membrane. Stimulates the activity of serine palmitoyltransferase (SPT), and thus plays a role in the biosynthesis of sphingolipids. This Kluyveromyces lactis (strain ATCC 8585 / CBS 2359 / DSM 70799 / NBRC 1267 / NRRL Y-1140 / WM37) (Yeast) protein is Serine palmitoyltransferase-regulating protein TSC3 (TSC3).